Reading from the N-terminus, the 133-residue chain is Complexin-1 (133 aa).

2 disordered regions span residues 1-40 (MDFV…RLEA) and 85-112 (AMEA…DEEE). The segment covering 15–40 (DMGKMLGGDEEKDPDAEKKEEERLEA) has biased composition (basic and acidic residues). Positions 28-60 (PDAEKKEEERLEALRQAEEERAGKYAKMEAERE) form a coiled coil.

Belongs to the complexin/synaphin family. In terms of assembly, binds to the SNARE core complex containing SNAP25, VAMP2 and syntaxin-1. In terms of tissue distribution, nervous system. Present in electric organ (at protein level).

It localises to the cytoplasm. The protein resides in the cytosol. Functionally, positively regulates a late step in synaptic vesicle exocytosis. The chain is Complexin-1 from Narke japonica (Japanese sleeper ray).